The primary structure comprises 124 residues: Large ribosomal subunit protein bL12 (124 aa).

Belongs to the bacterial ribosomal protein bL12 family. In terms of assembly, homodimer. Part of the ribosomal stalk of the 50S ribosomal subunit. Forms a multimeric L10(L12)X complex, where L10 forms an elongated spine to which 2 to 4 L12 dimers bind in a sequential fashion. Binds GTP-bound translation factors.

Its function is as follows. Forms part of the ribosomal stalk which helps the ribosome interact with GTP-bound translation factors. Is thus essential for accurate translation. The sequence is that of Large ribosomal subunit protein bL12 from Azobacteroides pseudotrichonymphae genomovar. CFP2.